A 676-amino-acid chain; its full sequence is Multisubstrate pseudouridine synthase 7 (676 aa).

Disordered regions lie at residues 1–27 and 87–110; these read MSDS…AKKL and KMPK…AARR. At serine 2 the chain carries N-acetylserine. Positions 94–110 are enriched in basic and acidic residues; that stretch reads RSKEEVNAEKESEAARR. The Nucleophile role is filled by aspartate 256. The region spanning 338–582 is the TRUD domain; it reads GFINYFGMQR…AGSYRTVIQK (245 aa).

Belongs to the pseudouridine synthase TruD family.

The protein resides in the nucleus. It is found in the cytoplasm. It catalyses the reaction uridine in 5S rRNA = pseudouridine in 5S rRNA. The enzyme catalyses uridine in snRNA = pseudouridine in snRNA. The catalysed reaction is uridine(13) in tRNA = pseudouridine(13) in tRNA. It carries out the reaction a uridine in mRNA = a pseudouridine in mRNA. In terms of biological role, catalyzes pseudouridylation at position 35 in U2 snRNA stem-loop II region which induces particular conformation of the mRNA-U2 snRNA duplex and places the nucleophile in an accessible position for the first step of splicing. Also catalyzes pseudouridylation at position 56 in U2 snRNA. Also catalyzes pseudouridylation at position 50 in 5S rRNA, position 13 in cytoplasmic tRNAs, and position 35 in pre-tRNA(Tyr). Pseudouridine residues in tRNAs may stabilize the local RNA conformation, favor interactions with protein partners and play an important role in the stabilization of the codon-anticodon interaction with mRNA. Also catalyzes pseudouridylation of mRNAs in response to heat shock: mediates pseudouridylation of mRNAs with the consensus sequence 5'-UGUAR-3'. This is Multisubstrate pseudouridine synthase 7 from Saccharomyces cerevisiae (strain ATCC 204508 / S288c) (Baker's yeast).